The chain runs to 354 residues: Histidinol-phosphate aminotransferase (354 aa).

The span at 1 to 11 shows a compositional bias: basic and acidic residues; the sequence is MKSFLSDKAKS. The interval 1 to 33 is disordered; the sequence is MKSFLSDKAKSIEPYTPGEQPKDKNYIKLNTNE. The residue at position 211 (K211) is an N6-(pyridoxal phosphate)lysine.

The protein belongs to the class-II pyridoxal-phosphate-dependent aminotransferase family. Histidinol-phosphate aminotransferase subfamily. In terms of assembly, homodimer. It depends on pyridoxal 5'-phosphate as a cofactor.

The enzyme catalyses L-histidinol phosphate + 2-oxoglutarate = 3-(imidazol-4-yl)-2-oxopropyl phosphate + L-glutamate. The protein operates within amino-acid biosynthesis; L-histidine biosynthesis; L-histidine from 5-phospho-alpha-D-ribose 1-diphosphate: step 7/9. The chain is Histidinol-phosphate aminotransferase from Brachyspira hyodysenteriae (strain ATCC 49526 / WA1).